The chain runs to 379 residues: Chaperone protein DnaJ (379 aa).

The region spanning 7–72 (CYYETLEVER…DKRAAYDRYG (66 aa)) is the J domain. Residues 135-213 (GKTAQIEIPV…CTGSGRVTKE (79 aa)) form a CR-type zinc finger. Zn(2+)-binding residues include C148, C151, C165, C168, C187, C190, C201, and C204. 4 CXXCXGXG motif repeats span residues 148–155 (CESCSGTG), 165–172 (CSTCGGAG), 187–194 (CPSCQGRG), and 201–208 (CPSCTGSG).

Belongs to the DnaJ family. Homodimer. Zn(2+) is required as a cofactor.

It localises to the cytoplasm. In terms of biological role, participates actively in the response to hyperosmotic and heat shock by preventing the aggregation of stress-denatured proteins and by disaggregating proteins, also in an autonomous, DnaK-independent fashion. Unfolded proteins bind initially to DnaJ; upon interaction with the DnaJ-bound protein, DnaK hydrolyzes its bound ATP, resulting in the formation of a stable complex. GrpE releases ADP from DnaK; ATP binding to DnaK triggers the release of the substrate protein, thus completing the reaction cycle. Several rounds of ATP-dependent interactions between DnaJ, DnaK and GrpE are required for fully efficient folding. Also involved, together with DnaK and GrpE, in the DNA replication of plasmids through activation of initiation proteins. The sequence is that of Chaperone protein DnaJ from Rhodopseudomonas palustris (strain HaA2).